Here is a 549-residue protein sequence, read N- to C-terminus: Carboxylesterase 1C (549 aa).

An N-terminal signal peptide occupies residues 1–18; it reads MWLCALVWASLAVCPIWG. N-linked (GlcNAc...) asparagine glycosylation is present at Asn-79. Cys-87 and Cys-116 form a disulfide bridge. The active-site Acyl-ester intermediate is the Ser-221. Cys-273 and Cys-284 are disulfide-bonded. Residues Asn-274, Asn-275, and Asn-302 are each glycosylated (N-linked (GlcNAc...) asparagine). The Charge relay system role is filled by Glu-340. Residue Asn-375 is glycosylated (N-linked (GlcNAc...) asparagine). Residue His-453 is the Charge relay system of the active site. Ser-471 carries the phosphoserine modification. Asn-476 carries an N-linked (GlcNAc...) asparagine glycan. A Prevents secretion from ER motif is present at residues 546-549; that stretch reads TEHT.

The protein belongs to the type-B carboxylesterase/lipase family.

It is found in the endoplasmic reticulum lumen. The catalysed reaction is a carboxylic ester + H2O = an alcohol + a carboxylate + H(+). Involved in the detoxification of xenobiotics and in the activation of ester and amide prodrugs. Involved in the extracellular metabolism of lung surfactant. This Rattus norvegicus (Rat) protein is Carboxylesterase 1C (Ces1c).